We begin with the raw amino-acid sequence, 131 residues long: Histone H2B (131 aa).

A compositionally biased stretch (basic and acidic residues) spans methionine 1–proline 19. Residues methionine 1 to arginine 38 form a disordered region. 2 positions are modified to N6-acetyllysine; alternate: lysine 7 and lysine 8. Glycyl lysine isopeptide (Lys-Gly) (interchain with G-Cter in SUMO); alternate cross-links involve residues lysine 7 and lysine 8. Residue serine 11 is modified to Phosphoserine. An N6-acetyllysine modification is found at lysine 12. Lysine 17 carries the N6-acetyllysine; alternate modification. Lysine 17 is covalently cross-linked (Glycyl lysine isopeptide (Lys-Gly) (interchain with G-Cter in SUMO); alternate). Lysine 18 is covalently cross-linked (Glycyl lysine isopeptide (Lys-Gly) (interchain with G-Cter in SUMO)). A Glycyl lysine isopeptide (Lys-Gly) (interchain with G-Cter in ubiquitin) cross-link involves residue lysine 125.

Belongs to the histone H2B family. In terms of assembly, the nucleosome is a histone octamer containing two molecules each of H2A, H2B, H3 and H4 assembled in one H3-H4 heterotetramer and two H2A-H2B heterodimers. The octamer wraps approximately 147 bp of DNA. In terms of processing, monoubiquitinated by the UBC2-BRE1 complex to form H2BK123ub1. H2BK123ub1 gives a specific tag for epigenetic transcriptional activation and is also prerequisite for H3K4me and H3K79me formation. H2BK123ub1 also modulates the formation of double-strand breaks during meiosis and is a prerequisite for DNA-damage checkpoint activation. Post-translationally, phosphorylated by STE20 to form H2BS10ph during progression through meiotic prophase. May be correlated with chromosome condensation. Acetylated by GCN5 to form H2BK11ac and H2BK16ac. H2BK16ac can also be formed by ESA1. Acetylation of N-terminal lysines and particularly formation of H2BK11acK16ac has a positive effect on transcription. In terms of processing, sumoylation to form H2BK6su or H2BK7su, and probably also H2BK16su or H2BK17su, occurs preferentially near the telomeres and represses gene transcription.

It is found in the nucleus. The protein localises to the chromosome. In terms of biological role, core component of nucleosome. Nucleosomes wrap and compact DNA into chromatin, limiting DNA accessibility to the cellular machineries which require DNA as a template. Histones thereby play a central role in transcription regulation, DNA repair, DNA replication and chromosomal stability. DNA accessibility is regulated via a complex set of post-translational modifications of histones, also called histone code, and nucleosome remodeling. The chain is Histone H2B (HTB1) from Lodderomyces elongisporus (strain ATCC 11503 / CBS 2605 / JCM 1781 / NBRC 1676 / NRRL YB-4239) (Yeast).